Here is a 642-residue protein sequence, read N- to C-terminus: Stress-activated map kinase-interacting protein 1 homolog (642 aa).

One can recognise a CRIM domain in the interval 189–314 (ARIREVIGYC…EREPLFQGLL (126 aa)). The interval 603–642 (IVSPSSDAPSRSSNGKNGGKFRKMSSLMASVMGRRKSDSK) is disordered. The segment covering 605–615 (SPSSDAPSRSS) has biased composition (low complexity).

This sequence belongs to the SIN1 family. In terms of assembly, component of the target of rapamycin complex 2 (TORC2).

Its function is as follows. Component of the target of rapamycin complex 2 (TORC2), which transduces signals from growth factors to pathways involved in proliferation, cytoskeletal organization and anabolic output. In response to growth factors, TORC2 phosphorylates and activates AGC protein kinase family members, such as Akt1. Within the TORC2 complex, sinh-1 acts as a substrate adapter which recognizes and binds AGC protein kinase family members for phosphorylation by mTor. The sequence is that of Stress-activated map kinase-interacting protein 1 homolog (sinh-1) from Caenorhabditis elegans.